The following is a 338-amino-acid chain: Citramalyl-CoA lyase, mitochondrial (338 aa).

The transit peptide at 1–20 directs the protein to the mitochondrion; sequence MALCVLQNAVRGAAALPRLK. Y48, K55, and K59 together coordinate substrate. 3 positions are modified to N6-acetyllysine: K55, K59, and K64. 2 positions are modified to N6-acetyllysine; alternate: K80 and K90. Residues K80 and K90 each carry the N6-succinyllysine; alternate modification. Residue R105 participates in substrate binding. Mg(2+) contacts are provided by E169 and D204. 270-271 is a substrate binding site; that stretch reads IH. At K307 the chain carries N6-succinyllysine. Residue D318 is part of the active site.

The protein belongs to the HpcH/HpaI aldolase family. Citrate lyase beta subunit-like subfamily. Homotrimer. Requires Mg(2+) as cofactor.

The protein resides in the mitochondrion. The enzyme catalyses glyoxylate + acetyl-CoA + H2O = (S)-malate + CoA + H(+). It carries out the reaction propanoyl-CoA + glyoxylate + H2O = 3-methylmalate + CoA + H(+). It catalyses the reaction (3S)-citramalyl-CoA = pyruvate + acetyl-CoA. The catalysed reaction is (S)-malyl-CoA + H2O = (S)-malate + CoA + H(+). Its function is as follows. Mitochondrial citramalyl-CoA lyase indirectly involved in the vitamin B12 metabolism. Converts citramalyl-CoA into acetyl-CoA and pyruvate in the C5-dicarboxylate catabolism pathway. The C5-dicarboxylate catabolism pathway is required to detoxify itaconate, a vitamin B12-poisoning metabolite. Also acts as a malate synthase in vitro, converting glyoxylate and acetyl-CoA to malate. Also displays malyl-CoA thioesterase activity. Also acts as a beta-methylmalate synthase in vitro, by mediating conversion of glyoxylate and propionyl-CoA to beta-methylmalate. Also has very weak citramalate synthase activity in vitro. The chain is Citramalyl-CoA lyase, mitochondrial (Clybl) from Rattus norvegicus (Rat).